A 386-amino-acid polypeptide reads, in one-letter code: Alanine racemase (386 aa).

Lysine 38 acts as the Proton acceptor; specific for D-alanine in catalysis. Lysine 38 is modified (N6-(pyridoxal phosphate)lysine). Arginine 136 provides a ligand contact to substrate. The active-site Proton acceptor; specific for L-alanine is the tyrosine 267. A substrate-binding site is contributed by methionine 315.

This sequence belongs to the alanine racemase family. It depends on pyridoxal 5'-phosphate as a cofactor.

It catalyses the reaction L-alanine = D-alanine. Its pathway is amino-acid biosynthesis; D-alanine biosynthesis; D-alanine from L-alanine: step 1/1. Its function is as follows. Catalyzes the interconversion of L-alanine and D-alanine. May also act on other amino acids. This chain is Alanine racemase (alr), found in Clostridium perfringens (strain ATCC 13124 / DSM 756 / JCM 1290 / NCIMB 6125 / NCTC 8237 / Type A).